We begin with the raw amino-acid sequence, 170 residues long: MNLKDYIATIENYPKEGITFRDISPLMADGNAYSYAVREIVQYATDKKIDMIVGPEARGFIVGCPVAFELGIGFAPVRKPGKLPREVIFADYEKEYGVDTLTMHADAIKPGQRVLIVDDLLATGGTVKATIEMIEKLGGVVAGCAFLVELDELNGREKIGDYDYKVLMHY.

Belongs to the purine/pyrimidine phosphoribosyltransferase family. As to quaternary structure, homodimer.

The protein localises to the cytoplasm. It catalyses the reaction AMP + diphosphate = 5-phospho-alpha-D-ribose 1-diphosphate + adenine. It participates in purine metabolism; AMP biosynthesis via salvage pathway; AMP from adenine: step 1/1. Functionally, catalyzes a salvage reaction resulting in the formation of AMP, that is energically less costly than de novo synthesis. In Streptococcus pneumoniae (strain Taiwan19F-14), this protein is Adenine phosphoribosyltransferase.